Consider the following 267-residue polypeptide: Orotidine 5'-phosphate decarboxylase (267 aa).

Lys93 serves as the catalytic Proton donor.

This sequence belongs to the OMP decarboxylase family. Type 2 subfamily.

It catalyses the reaction orotidine 5'-phosphate + H(+) = UMP + CO2. It functions in the pathway pyrimidine metabolism; UMP biosynthesis via de novo pathway; UMP from orotate: step 2/2. This is Orotidine 5'-phosphate decarboxylase from Halobacterium salinarum (strain ATCC 29341 / DSM 671 / R1).